A 266-amino-acid chain; its full sequence is Thymidylate synthase (266 aa).

Arg-24 contributes to the dUMP binding site. His-54 is a (6R)-5,10-methylene-5,6,7,8-tetrahydrofolate binding site. DUMP is bound at residue 129–130 (RR). Cys-149 serves as the catalytic Nucleophile. DUMP contacts are provided by residues 169–172 (RSAD), Asn-180, and 210–212 (HIY). Position 172 (Asp-172) interacts with (6R)-5,10-methylene-5,6,7,8-tetrahydrofolate. Ala-265 lines the (6R)-5,10-methylene-5,6,7,8-tetrahydrofolate pocket.

The protein belongs to the thymidylate synthase family. Bacterial-type ThyA subfamily. Homodimer.

The protein localises to the cytoplasm. It catalyses the reaction dUMP + (6R)-5,10-methylene-5,6,7,8-tetrahydrofolate = 7,8-dihydrofolate + dTMP. Its pathway is pyrimidine metabolism; dTTP biosynthesis. Its function is as follows. Catalyzes the reductive methylation of 2'-deoxyuridine-5'-monophosphate (dUMP) to 2'-deoxythymidine-5'-monophosphate (dTMP) while utilizing 5,10-methylenetetrahydrofolate (mTHF) as the methyl donor and reductant in the reaction, yielding dihydrofolate (DHF) as a by-product. This enzymatic reaction provides an intracellular de novo source of dTMP, an essential precursor for DNA biosynthesis. The sequence is that of Thymidylate synthase from Mycobacterium ulcerans (strain Agy99).